We begin with the raw amino-acid sequence, 272 residues long: Glycerol-3-phosphate acyltransferase (272 aa).

6 consecutive transmembrane segments (helical) span residues 9–29 (IIIL…GILI), 60–80 (AIVM…CLLI), 99–119 (VIIY…CFYF), 149–169 (ASIS…ICLI), 173–193 (VSLA…IPHL), and 226–246 (LNWW…VLVI).

The protein belongs to the PlsY family. In terms of assembly, probably interacts with PlsX.

Its subcellular location is the cell membrane. It carries out the reaction an acyl phosphate + sn-glycerol 3-phosphate = a 1-acyl-sn-glycero-3-phosphate + phosphate. The protein operates within lipid metabolism; phospholipid metabolism. Functionally, catalyzes the transfer of an acyl group from acyl-phosphate (acyl-PO(4)) to glycerol-3-phosphate (G3P) to form lysophosphatidic acid (LPA). This enzyme utilizes acyl-phosphate as fatty acyl donor, but not acyl-CoA or acyl-ACP. The sequence is that of Glycerol-3-phosphate acyltransferase from Malacoplasma penetrans (strain HF-2) (Mycoplasma penetrans).